The chain runs to 257 residues: Type III pantothenate kinase (257 aa).

6–13 (DVGNTNTV) is an ATP binding site. Residues tyrosine 100 and 107 to 110 (GADR) contribute to the substrate site. Catalysis depends on aspartate 109, which acts as the Proton acceptor. Aspartate 129 is a binding site for K(+). Residue threonine 132 coordinates ATP. Threonine 185 provides a ligand contact to substrate.

It belongs to the type III pantothenate kinase family. As to quaternary structure, homodimer. The cofactor is NH4(+). It depends on K(+) as a cofactor.

The protein resides in the cytoplasm. The enzyme catalyses (R)-pantothenate + ATP = (R)-4'-phosphopantothenate + ADP + H(+). The protein operates within cofactor biosynthesis; coenzyme A biosynthesis; CoA from (R)-pantothenate: step 1/5. Its function is as follows. Catalyzes the phosphorylation of pantothenate (Pan), the first step in CoA biosynthesis. This chain is Type III pantothenate kinase, found in Desulfatibacillum aliphaticivorans.